A 100-amino-acid chain; its full sequence is Transcription and mRNA export factor SUS1 (100 aa).

The protein belongs to the ENY2 family. As to quaternary structure, component of the nuclear pore complex (NPC)-associated TREX-2 complex (transcription and export complex 2), composed of at least SUS1, SAC3, THP1, SEM1, and CDC31. TREX-2 contains 2 SUS1 chains. The TREX-2 complex interacts with the nucleoporin NUP1. Component of the 1.8 MDa SAGA transcription coactivator-HAT complex. SAGA is built of 5 distinct domains with specialized functions. Within the SAGA complex, SUS1, SGF11, SGF73 and UBP8 form an additional subcomplex of SAGA called the DUB module (deubiquitination module). Interacts directly with THP1, SAC3, SGF11, and with the RNA polymerase II.

Its subcellular location is the nucleus. It localises to the nucleoplasm. The protein localises to the cytoplasm. The protein resides in the P-body. Involved in mRNA export coupled transcription activation by association with both the TREX-2 and the SAGA complexes. At the promoters, SAGA is required for recruitment of the basal transcription machinery. It influences RNA polymerase II transcriptional activity through different activities such as TBP interaction and promoter selectivity, interaction with transcription activators, and chromatin modification through histone acetylation and deubiquitination. Within the SAGA complex, participates in a subcomplex required for deubiquitination of H2B and for the maintenance of steady-state H3 methylation levels. The TREX-2 complex functions in docking export-competent ribonucleoprotein particles (mRNPs) to the nuclear entrance of the nuclear pore complex (nuclear basket). TREX-2 participates in mRNA export and accurate chromatin positioning in the nucleus by tethering genes to the nuclear periphery. May also be involved in cytoplasmic mRNA decay by interaction with components of P-bodies. The sequence is that of Transcription and mRNA export factor SUS1 from Cryptococcus neoformans var. neoformans serotype D (strain B-3501A) (Filobasidiella neoformans).